A 609-amino-acid chain; its full sequence is UvrABC system protein C (609 aa).

The GIY-YIG domain maps to 16–94 (SSPGVYRMYD…IKQYMPRYNV (79 aa)). The UVR domain occupies 203-238 (LQVMTELVSKMEASALALEYEQAASYRDQIAALRRV).

It belongs to the UvrC family. As to quaternary structure, interacts with UvrB in an incision complex.

The protein localises to the cytoplasm. In terms of biological role, the UvrABC repair system catalyzes the recognition and processing of DNA lesions. UvrC both incises the 5' and 3' sides of the lesion. The N-terminal half is responsible for the 3' incision and the C-terminal half is responsible for the 5' incision. This Shewanella sediminis (strain HAW-EB3) protein is UvrABC system protein C.